Reading from the N-terminus, the 196-residue chain is Large ribosomal subunit protein uL11m (196 aa).

It belongs to the universal ribosomal protein uL11 family. Component of the mitochondrial ribosome large subunit (39S) which comprises a 16S rRNA and about 50 distinct proteins.

It localises to the mitochondrion. In Drosophila melanogaster (Fruit fly), this protein is Large ribosomal subunit protein uL11m (mRpL11).